The chain runs to 512 residues: Cytochrome P450 monooxygenase pbrB (512 aa).

Residues 6-29 (LSFPAAVGAAFGAFAIYVVARCIY) traverse the membrane as a helical segment. C452 contacts heme.

The protein belongs to the cytochrome P450 family. It depends on heme as a cofactor.

Its subcellular location is the membrane. It participates in secondary metabolite biosynthesis; terpenoid biosynthesis. Cytochrome P450 monooxygenase; part of the gene cluster that mediates the biosynthesis of the sesquiterpenoid aspterric acid (AA), an inhibitor of dihydroxy-acid dehydratase (DHAD) effective as an herbicide. PbrB catalyzes the second step within the pathway and converts (-)-daucane produced by the terpene cyclase pbrA into an alpha-epoxy carboxylate intermediate which is further converted into the tricyclic aspterric acid by the cytochrome P450 monooxygenase pbrC. The polypeptide is Cytochrome P450 monooxygenase pbrB (Penicillium brasilianum).